Reading from the N-terminus, the 89-residue chain is Small ribosomal subunit protein uS15 (89 aa).

The tract at residues 1–23 (MTLNTEAKQKIINKHQTHGTDTG) is disordered.

This sequence belongs to the universal ribosomal protein uS15 family. In terms of assembly, part of the 30S ribosomal subunit. Forms a bridge to the 50S subunit in the 70S ribosome, contacting the 23S rRNA.

In terms of biological role, one of the primary rRNA binding proteins, it binds directly to 16S rRNA where it helps nucleate assembly of the platform of the 30S subunit by binding and bridging several RNA helices of the 16S rRNA. Its function is as follows. Forms an intersubunit bridge (bridge B4) with the 23S rRNA of the 50S subunit in the ribosome. The chain is Small ribosomal subunit protein uS15 from Prochlorococcus marinus (strain SARG / CCMP1375 / SS120).